Consider the following 1851-residue polypeptide: Protein lap4 (1851 aa).

LRR repeat units follow at residues 38–59 (TLEE…FFRL), 61–82 (RLRK…IQNF), 84–105 (NLVE…IKHL), 107–128 (SLQV…FSQL), 130–152 (NLTV…GSLT), 153–174 (QLES…ISQL), 176–197 (KLKR…LGYL), 199–220 (GLHE…LGLL), 222–243 (KLTY…ISGL), 245–267 (SLTD…AKLS), 268–289 (RLTI…LGNC), 291–312 (NMQE…IGQM), 314–335 (KLNN…IGQC), 337–358 (NLGV…LGNC), 360–382 (VLHV…VNLQ), and 383–403 (LKAV…QPDT). 3 disordered regions span residues 427–474 (PARD…KDLK), 584–641 (VGGS…VQHL), and 656–719 (SQER…PDNL). Serine 433 and serine 435 each carry phosphoserine. Residues 438–461 (FEEREPSRTVVKFSEEATQEKETP) are compositionally biased toward basic and acidic residues. Residues 471–492 (KDLKAKAQKLKVERSRNEEHAN) adopt a coiled-coil conformation. A compositionally biased stretch (acidic residues) spans 589–601 (EVQDDDEQEDEFE). Over residues 620 to 639 (RPPKLHRRDTPHHLKNKRVQ) the composition is skewed to basic residues. The span at 656-672 (SQERNDTTPQHSLSGKV) shows a compositional bias: polar residues. Residues 676-686 (IEEEEQLEVEQ) show a composition bias toward acidic residues. Positions 677–693 (EEEEQLEVEQEQQQQQQ) form a coiled coil. 3 positions are modified to phosphoserine: serine 700, serine 702, and serine 705. The 88-residue stretch at 731–818 (EIHIERTAAG…VLVLVVQREV (88 aa)) folds into the PDZ 1 domain. Residues serine 834 and serine 837 each carry the phosphoserine modification. Positions 929–1019 (HTTLIRDQIG…FVRLVLQREY (91 aa)) constitute a PDZ 2 domain. Phosphoserine is present on residues serine 1031 and serine 1041. The disordered stretch occupies residues 1067 to 1150 (LATTTPTPKP…EAQPSSLRPL (84 aa)). 2 stretches are compositionally biased toward polar residues: residues 1080 to 1097 (ASIS…TNGF) and 1132 to 1149 (GSTT…SLRP). PDZ domains are found at residues 1239 to 1329 (EVVL…QHDP) and 1336 to 1428 (EVLL…CKGY). The span at 1448-1467 (NSSASCSGGSRQGSRASETG) shows a compositional bias: polar residues. The disordered stretch occupies residues 1448–1485 (NSSASCSGGSRQGSRASETGSELSQSQSVSSLDHEEDE). Residues 1468 to 1478 (SELSQSQSVSS) are compositionally biased toward low complexity. Serine 1475, serine 1477, and serine 1478 each carry phosphoserine. Threonine 1599 carries the phosphothreonine modification. Positions 1647 to 1669 (AESANSAGAPSPAVPASTPGSAP) are enriched in low complexity. Disordered regions lie at residues 1647-1751 (AESA…KVFS) and 1772-1851 (LRRD…VFRS). A compositionally biased stretch (basic and acidic residues) spans 1725–1751 (VSDKKRFFESAMEDQHKPTQKTDKVFS). Residues 1753 to 1790 (LSKDEVEKLRQEEERKIATLRRDKNSRLLDAANDNIDK) are a coiled coil. A compositionally biased stretch (acidic residues) spans 1807 to 1816 (DDNDDSDQEE). Over residues 1831–1851 (HFDDAEDMRNPLDEIEAVFRS) the composition is skewed to basic and acidic residues.

This sequence belongs to the LAP (LRR and PDZ) protein family. As to expression, during germ band extension, expression of isoform A occurs predominantly in neuroblasts derived from the neuro-ectoderm and later is restricted to CNS neurons and pole cells. Isoform C is strongly expressed in PNS and a subset of CNS neurons. In the adult, expressed in third antennal segment and maxillary palps, major olfactory organs and in Johnstons organ in the second antennal segment. Expression is also observed in cortical regions of the brain. Isoforms expressed in epithelia are coexpressed with dlg1 throughout development.

Its subcellular location is the cytoplasm. The protein localises to the apicolateral cell membrane. The protein resides in the cell junction. It is found in the septate junction. Required for polarization of the embryonic, imaginal disk and follicular epithelia. Specifically restricts apical membrane determinants to the apical cell surface; acts to exclude crb from the basolateral domain and define adherens junction position. Regulates cellular growth and differentiation; acts as a tumor suppressor. Essential for odor guided behavior. This is Protein lap4 from Drosophila melanogaster (Fruit fly).